We begin with the raw amino-acid sequence, 293 residues long: AKT-interacting protein (293 aa).

Residues 1-11 (MNPFWSMSTSS) show a composition bias toward polar residues. Residues 1 to 63 (MNPFWSMSTS…TSPAPAAQST (63 aa)) form a disordered region. Positions 14–23 (KRSEGEEKTL) are enriched in basic and acidic residues. Serine 30 is subject to Phosphoserine. A UBC core domain is found at 74–222 (YLEYSLLAEF…VVDSVQVCTA (149 aa)). Over residues 253-265 (MLTQKKKPEEQHN) the composition is skewed to basic and acidic residues. The interval 253-293 (MLTQKKKPEEQHNKSVHVAGLSWVKPGSVQPFSKEEKTVAT) is disordered.

This sequence belongs to the ubiquitin-conjugating enzyme family. FTS subfamily. In terms of assembly, component of the FTS/Hook/FHIP complex (FHF complex), composed of AKTIP/FTS, FHIP1B, and one or more members of the Hook family of proteins HOOK1, HOOK2, and HOOK3. Interacts directly with HOOK1, HOOK2 and HOOK3. The FHF complex associates with the homotypic vesicular sorting complex (the HOPS complex). Also interacts with AKT1. May interact with FHIP1A.

Its subcellular location is the cytoplasm. The protein resides in the cell membrane. In terms of biological role, component of the FTS/Hook/FHIP complex (FHF complex). The FHF complex may function to promote vesicle trafficking and/or fusion via the homotypic vesicular protein sorting complex (the HOPS complex). Regulates apoptosis by enhancing phosphorylation and activation of AKT1. Increases release of TNFSF6 via the AKT1/GSK3B/NFATC1 signaling cascade. FHF complex promotes the distribution of AP-4 complex to the perinuclear area of the cell. The polypeptide is AKT-interacting protein (AKTIP) (Pongo abelii (Sumatran orangutan)).